Reading from the N-terminus, the 217-residue chain is Thymidylate kinase (217 aa).

7-14 lines the ATP pocket; the sequence is GIDGAGKS.

Belongs to the thymidylate kinase family.

It catalyses the reaction dTMP + ATP = dTDP + ADP. Its function is as follows. Phosphorylation of dTMP to form dTDP in both de novo and salvage pathways of dTTP synthesis. The polypeptide is Thymidylate kinase (Pelodictyon phaeoclathratiforme (strain DSM 5477 / BU-1)).